A 114-amino-acid polypeptide reads, in one-letter code: Large ribosomal subunit protein bL19 (114 aa).

Belongs to the bacterial ribosomal protein bL19 family.

Its function is as follows. This protein is located at the 30S-50S ribosomal subunit interface and may play a role in the structure and function of the aminoacyl-tRNA binding site. The chain is Large ribosomal subunit protein bL19 from Bacillus mycoides (strain KBAB4) (Bacillus weihenstephanensis).